A 516-amino-acid chain; its full sequence is GMP synthase [glutamine-hydrolyzing] (516 aa).

Residues 8–198 (KILILDFGSQ…VVNICGCDTL (191 aa)) form the Glutamine amidotransferase type-1 domain. The active-site Nucleophile is Cys-84. Active-site residues include His-172 and Glu-174. One can recognise a GMPS ATP-PPase domain in the interval 199-391 (WNIENIIEND…LGLPYNMLYR (193 aa)). 226 to 232 (SGGVDSS) is a binding site for ATP.

Homodimer.

The enzyme catalyses XMP + L-glutamine + ATP + H2O = GMP + L-glutamate + AMP + diphosphate + 2 H(+). Its pathway is purine metabolism; GMP biosynthesis; GMP from XMP (L-Gln route): step 1/1. Functionally, catalyzes the synthesis of GMP from XMP. The sequence is that of GMP synthase [glutamine-hydrolyzing] from Francisella tularensis subsp. holarctica (strain FTNF002-00 / FTA).